The following is a 341-amino-acid chain: S-adenosylmethionine:tRNA ribosyltransferase-isomerase (341 aa).

Belongs to the QueA family. Monomer.

The protein localises to the cytoplasm. The enzyme catalyses 7-aminomethyl-7-carbaguanosine(34) in tRNA + S-adenosyl-L-methionine = epoxyqueuosine(34) in tRNA + adenine + L-methionine + 2 H(+). The protein operates within tRNA modification; tRNA-queuosine biosynthesis. Transfers and isomerizes the ribose moiety from AdoMet to the 7-aminomethyl group of 7-deazaguanine (preQ1-tRNA) to give epoxyqueuosine (oQ-tRNA). The chain is S-adenosylmethionine:tRNA ribosyltransferase-isomerase from Staphylococcus epidermidis (strain ATCC 35984 / DSM 28319 / BCRC 17069 / CCUG 31568 / BM 3577 / RP62A).